The chain runs to 68 residues: Protein SlyX homolog (68 aa).

Belongs to the SlyX family.

This chain is Protein SlyX homolog, found in Ectopseudomonas mendocina (strain ymp) (Pseudomonas mendocina).